Here is a 440-residue protein sequence, read N- to C-terminus: MNPSQILENLKKELSENEYENYLSNLKFNEKQSKADLLVFNAPNELMAKFIQTKYGKKIAHFYEVQSGNKAIINIQAQSAKQSNKSTKIDIAHIKAQSTILNPSFTFESFVVGDSNKYAYGACKAIAHKDKLGKLYNPIFVYGPTGLGKTHLLQAVGNASLEMGKKVIYATSENFINDFTSNLKNGSLDKFHEKYRNCDVLLIDDVQFLGKTDKIQEEFFFIFNEIKNNDGQIIMTSDNPPNMLKGITERLKSRFAHGIIADITPPQLDTKIAIIRKKCEFNDINLSNDIINYIATSLGDNIREIEGIIISLNAYATILGQEITLELAKSVMKDHIKEKKENITIDDILSLVCKEFNIKPSDVKSNKKTQNIVTARRIVIYLARALTALTMPQLANYFEMKDHTAISHNVKKITEMIENDASLKAKIEELKNKILVKSQS.

The segment at 1–74 (MNPSQILENL…VQSGNKAIIN (74 aa)) is domain I, interacts with DnaA modulators. A domain II region spans residues 74–99 (NIQAQSAKQSNKSTKIDIAHIKAQST). The interval 100 to 316 (ILNPSFTFES…GIIISLNAYA (217 aa)) is domain III, AAA+ region. 4 residues coordinate ATP: Gly146, Gly148, Lys149, and Thr150. Residues 317 to 440 (TILGQEITLE…KNKILVKSQS (124 aa)) are domain IV, binds dsDNA.

This sequence belongs to the DnaA family. As to quaternary structure, oligomerizes as a right-handed, spiral filament on DNA at oriC.

The protein resides in the cytoplasm. Functionally, plays an essential role in the initiation and regulation of chromosomal replication. ATP-DnaA binds to the origin of replication (oriC) to initiate formation of the DNA replication initiation complex once per cell cycle. Binds the DnaA box (a 9 base pair repeat at the origin) and separates the double-stranded (ds)DNA. Forms a right-handed helical filament on oriC DNA; dsDNA binds to the exterior of the filament while single-stranded (ss)DNA is stabiized in the filament's interior. The ATP-DnaA-oriC complex binds and stabilizes one strand of the AT-rich DNA unwinding element (DUE), permitting loading of DNA polymerase. After initiation quickly degrades to an ADP-DnaA complex that is not apt for DNA replication. Binds acidic phospholipids. The polypeptide is Chromosomal replication initiator protein DnaA (Campylobacter jejuni subsp. jejuni serotype O:2 (strain ATCC 700819 / NCTC 11168)).